The following is a 342-amino-acid chain: Elongation factor Ts (342 aa).

Positions 80 to 83 are involved in Mg(2+) ion dislocation from EF-Tu; it reads TDFV.

Belongs to the EF-Ts family.

It localises to the cytoplasm. Functionally, associates with the EF-Tu.GDP complex and induces the exchange of GDP to GTP. It remains bound to the aminoacyl-tRNA.EF-Tu.GTP complex up to the GTP hydrolysis stage on the ribosome. The sequence is that of Elongation factor Ts from Lactobacillus delbrueckii subsp. bulgaricus (strain ATCC 11842 / DSM 20081 / BCRC 10696 / JCM 1002 / NBRC 13953 / NCIMB 11778 / NCTC 12712 / WDCM 00102 / Lb 14).